Reading from the N-terminus, the 260-residue chain is Triosephosphate isomerase (260 aa).

Residue 11 to 13 participates in substrate binding; it reads NWK. H103 functions as the Electrophile in the catalytic mechanism. Catalysis depends on E175, which acts as the Proton acceptor. Substrate contacts are provided by residues G181, S220, and 241–242; that span reads GG.

It belongs to the triosephosphate isomerase family. In terms of assembly, homodimer.

It localises to the cytoplasm. The enzyme catalyses D-glyceraldehyde 3-phosphate = dihydroxyacetone phosphate. It functions in the pathway carbohydrate biosynthesis; gluconeogenesis. Its pathway is carbohydrate degradation; glycolysis; D-glyceraldehyde 3-phosphate from glycerone phosphate: step 1/1. In terms of biological role, involved in the gluconeogenesis. Catalyzes stereospecifically the conversion of dihydroxyacetone phosphate (DHAP) to D-glyceraldehyde-3-phosphate (G3P). This Shewanella frigidimarina (strain NCIMB 400) protein is Triosephosphate isomerase.